The primary structure comprises 1252 residues: Plasma membrane calcium-transporting ATPase mca-1 (1252 aa).

The Cytoplasmic segment spans residues 1–121 (MQKSQNVTAV…VRLVLDACKD (121 aa)). Residues 122 to 142 (PTLVILVLSGFINLALSFYEP) form a helical membrane-spanning segment. Topologically, residues 143–180 (TSAAEDATQHLVNATTAAILANGTFMSTTEAPSEGHGT) are extracellular. N-linked (GlcNAc...) asparagine glycosylation is found at asparagine 155 and asparagine 164. A helical membrane pass occupies residues 181 to 201 (AWIEGVAILLCVIVVVLVTAV). The Cytoplasmic portion of the chain corresponds to 202–376 (NDYSKERQFR…KSVLQAKLSK (175 aa)). The disordered stretch occupies residues 330–361 (DDSTSTSSSSSSSSSSSGSSSNGSSDSSKSGD). Residues 333–357 (TSTSSSSSSSSSSSGSSSNGSSDSS) are compositionally biased toward low complexity. The chain crosses the membrane as a helical span at residues 377–397 (LALQIIYCGTTIAIIALIVLV). Over 398–422 (TRFCLDHYVFEKNEFSLVDIQMFVK) the chain is Extracellular. A helical transmembrane segment spans residues 423-443 (FFIIAVTILVISIPEGLPLAI). Ca(2+) is bound by residues valine 432, isoleucine 435, and glutamate 437. The Cytoplasmic portion of the chain corresponds to 444-879 (ALALTYSVRK…GRNVYDSISK (436 aa)). Aspartate 479 functions as the 4-aspartylphosphate intermediate in the catalytic mechanism. Aspartate 479 and threonine 481 together coordinate Mg(2+). 8 residues coordinate ATP: threonine 481, glutamate 553, lysine 612, threonine 733, glycine 734, aspartate 735, arginine 792, and lysine 798. Aspartate 822 serves as a coordination point for Mg(2+). Asparagine 825 contacts ATP. Residues 880–900 (FLQFQLTVNVVAVITAFVGAV) traverse the membrane as a helical segment. Asparagine 888 contributes to the Ca(2+) binding site. The Extracellular portion of the chain corresponds to 901-908 (TVSDSPLK). Residues 909 to 929 (AVHMLWINLIMDTLASLALAT) form a helical membrane-spanning segment. Residues asparagine 916 and aspartate 920 each coordinate Ca(2+). The Cytoplasmic segment spans residues 930–960 (EQPTDELLERKPYGRKKSLISRTMVKNILCH). The chain crosses the membrane as a helical span at residues 961–981 (ALYQLIIIFVIFFYGDTIFGI). Over 982–989 (KTGLYAPL) the chain is Extracellular. Residues 990 to 1010 (FAPPSQHFTLVFNAFVMMTVF) form a helical membrane-spanning segment. Residues 1011 to 1035 (NEINARKVHGERNVFKGLASNRVFC) lie on the Cytoplasmic side of the membrane. The helical transmembrane segment at 1036–1056 (VIWVTTFIAQIIIVQFGGAWF) threads the bilayer. Residues 1057 to 1065 (STAPLTLQQ) are Extracellular-facing. The helical transmembrane segment at 1066-1086 (WIVCLVLGFSTLIWGQIVATI) threads the bilayer. Residues 1087–1252 (PSKKLPKAWK…NVDMEDIELN (166 aa)) are Cytoplasmic-facing. Positions 1124 to 1142 (LRRSGKSLWVRGMFIIGNH) are calmodulin-binding subdomain A. A calmodulin-binding subdomain B region spans residues 1143 to 1152 (LRVLRAFGME). The interval 1181-1252 (YRHQKHQEKK…NVDMEDIELN (72 aa)) is disordered.

The protein belongs to the cation transport ATPase (P-type) (TC 3.A.3) family. Type IIB subfamily. As to quaternary structure, interacts with calmodulin.

It localises to the cell membrane. It carries out the reaction Ca(2+)(in) + ATP + H2O = Ca(2+)(out) + ADP + phosphate + H(+). Functionally, catalyzes the hydrolysis of ATP coupled with the transport of calcium across a membrane. The sequence is that of Plasma membrane calcium-transporting ATPase mca-1 from Caenorhabditis elegans.